A 353-amino-acid polypeptide reads, in one-letter code: O-antigen chain mannosyltransferase RfbU (353 aa).

This sequence belongs to the glycosyltransferase group 1 family. Glycosyltransferase 4 subfamily.

The catalysed reaction is alpha-L-rhamnosyl-(1-&gt;3)-alpha-D-galactosyl-1-diphospho-di-trans,octa-cis-undecaprenol + GDP-alpha-D-mannose = alpha-D-Man-(1-&gt;4)-alpha-L-Rha-(1-&gt;3)-alpha-D-Gal-di-trans,octa-cis-undecaprenyl diphosphate + GDP + H(+). It functions in the pathway bacterial outer membrane biogenesis; LPS O-antigen biosynthesis. In terms of biological role, mannosyltransferase involved in the biosynthesis of the repeat unit of the lipopolysaccharide (LPS) O-antigen region. Catalyzes the addition of a mannose to the rhamnosyl-galactosyl-undecaprenyl diphosphate intermediate. This Salmonella typhimurium (strain LT2 / SGSC1412 / ATCC 700720) protein is O-antigen chain mannosyltransferase RfbU.